The chain runs to 530 residues: Autoinducer-2 kinase (530 aa).

Belongs to the FGGY kinase family.

The protein resides in the cytoplasm. The enzyme catalyses (S)-4,5-dihydroxypentane-2,3-dione + ATP = (2S)-2-hydroxy-3,4-dioxopentyl phosphate + ADP + H(+). In terms of biological role, catalyzes the phosphorylation of autoinducer-2 (AI-2) to phospho-AI-2, which subsequently inactivates the transcriptional regulator LsrR and leads to the transcription of the lsr operon. Phosphorylates the ring-open form of (S)-4,5-dihydroxypentane-2,3-dione (DPD), which is the precursor to all AI-2 signaling molecules, at the C5 position. This is Autoinducer-2 kinase from Enterobacter sp. (strain 638).